A 275-amino-acid chain; its full sequence is MANSNPKLLVTQNPFSVFLLTFLLLITNVKSDSFSFNFPKFDTDTKSIIIDGDANTTNGVLQLTKKDQLGNPSPHSFGLSFFLGAIHLSDKQSGKVADFTTEFSFVVNPKGSQLHGDGFTFFIASLDYEFPEKSSDGGFLGLFDKESAFNTSQNSIVAVEFDSFRNEWDPQIAGNSPHIGIDINTIRSSATALWPIDRVPEGSIGKAHISYNPASKKLTALVTYLNGPVIEETAVSYTVDFAAILPEYVLVGFSGATGELAETHDILSWSFTSNL.

The first 31 residues, 1–31, serve as a signal peptide directing secretion; sequence MANSNPKLLVTQNPFSVFLLTFLLLITNVKS. N-linked (GlcNAc...) asparagine glycans are attached at residues N55 and N150.

The protein belongs to the leguminous lectin family.

Functionally, may be involved in arbuscular mycorrhizal (AM) symbiosis with AM fungi. This Medicago truncatula (Barrel medic) protein is Lectin 8.